Consider the following 660-residue polypeptide: Threonine--tRNA ligase (660 aa).

Positions 1–49 (MPINEIRVQKGQRYRDAINDKKVIAVKKGDKFLDLDEIAGEDEAVQPVY) constitute a TGS domain. The catalytic stretch occupies residues 225–554 (DHRKIIAEMD…LLEHFAGKLP (330 aa)). Cysteine 318, histidine 369, and histidine 531 together coordinate Zn(2+).

This sequence belongs to the class-II aminoacyl-tRNA synthetase family. As to quaternary structure, homodimer. Requires Zn(2+) as cofactor.

The protein localises to the cytoplasm. It catalyses the reaction tRNA(Thr) + L-threonine + ATP = L-threonyl-tRNA(Thr) + AMP + diphosphate + H(+). Its function is as follows. Catalyzes the attachment of threonine to tRNA(Thr) in a two-step reaction: L-threonine is first activated by ATP to form Thr-AMP and then transferred to the acceptor end of tRNA(Thr). This Thermoplasma volcanium (strain ATCC 51530 / DSM 4299 / JCM 9571 / NBRC 15438 / GSS1) protein is Threonine--tRNA ligase.